The chain runs to 430 residues: Adenylosuccinate synthetase (430 aa).

GTP is bound by residues 12 to 18 and 40 to 42; these read GDEGKGK and GHT. Residue Asp13 is the Proton acceptor of the active site. Mg(2+) is bound by residues Asp13 and Gly40. IMP-binding positions include 13–16, 38–41, Thr130, Arg144, Gln224, Thr239, and Arg303; these read DEGK and NAGH. Catalysis depends on His41, which acts as the Proton donor. 299 to 305 is a substrate binding site; it reads TNTGRPR. GTP-binding positions include Arg305, 331 to 333, and 413 to 415; these read KLD and STS.

This sequence belongs to the adenylosuccinate synthetase family. As to quaternary structure, homodimer. Mg(2+) is required as a cofactor.

Its subcellular location is the cytoplasm. The enzyme catalyses IMP + L-aspartate + GTP = N(6)-(1,2-dicarboxyethyl)-AMP + GDP + phosphate + 2 H(+). It participates in purine metabolism; AMP biosynthesis via de novo pathway; AMP from IMP: step 1/2. In terms of biological role, plays an important role in the de novo pathway of purine nucleotide biosynthesis. Catalyzes the first committed step in the biosynthesis of AMP from IMP. The chain is Adenylosuccinate synthetase from Rhodopseudomonas palustris (strain BisB5).